A 166-amino-acid chain; its full sequence is MRILSIEPLSKAAFAPFGEVIETEGSDYFMINGGSTRRYHALAEVQTSAPEDRAIVSIFVARALPMPLTIRMLERHPLGSQAFVPLRGNPFLIVVAPPGDAPRPEQVRVFLGNGRQGVNYQRGVWHHPVLALLDDDEFLVIDRSGAGPNCDEHFFGEDEQLLLHRP.

The protein belongs to the ureidoglycolate lyase family. Homodimer. Requires Ni(2+) as cofactor.

The enzyme catalyses (S)-ureidoglycolate = urea + glyoxylate. Its pathway is nitrogen metabolism; (S)-allantoin degradation. Catalyzes the catabolism of the allantoin degradation intermediate (S)-ureidoglycolate, generating urea and glyoxylate. Involved in the utilization of allantoin as nitrogen source. In Azotobacter vinelandii (strain DJ / ATCC BAA-1303), this protein is Ureidoglycolate lyase.